The primary structure comprises 221 residues: Probable septum site-determining protein MinC (221 aa).

This sequence belongs to the MinC family. Interacts with MinD and FtsZ.

Its function is as follows. Cell division inhibitor that blocks the formation of polar Z ring septums. Rapidly oscillates between the poles of the cell to destabilize FtsZ filaments that have formed before they mature into polar Z rings. Prevents FtsZ polymerization. The sequence is that of Probable septum site-determining protein MinC from Shewanella baltica (strain OS223).